Consider the following 916-residue polypeptide: Protein translocase subunit SecA (916 aa).

Residues Gln87, Gly105–Thr109, and Asp507 contribute to the ATP site. Residues Cys900, Cys902, Cys911, and His912 each coordinate Zn(2+).

It belongs to the SecA family. Monomer and homodimer. Part of the essential Sec protein translocation apparatus which comprises SecA, SecYEG and auxiliary proteins SecDF-YajC and YidC. Requires Zn(2+) as cofactor.

The protein localises to the cell inner membrane. Its subcellular location is the cytoplasm. The catalysed reaction is ATP + H2O + cellular proteinSide 1 = ADP + phosphate + cellular proteinSide 2.. Part of the Sec protein translocase complex. Interacts with the SecYEG preprotein conducting channel. Has a central role in coupling the hydrolysis of ATP to the transfer of proteins into and across the cell membrane, serving both as a receptor for the preprotein-SecB complex and as an ATP-driven molecular motor driving the stepwise translocation of polypeptide chains across the membrane. This chain is Protein translocase subunit SecA, found in Neisseria gonorrhoeae (strain ATCC 700825 / FA 1090).